Consider the following 202-residue polypeptide: Histone chaperone ASF1B (202 aa).

The interval 1–156 is interaction with histone H3 and CHAF1B; the sequence is MAKVSVLNVA…TRFHINWDNN (156 aa). Residue serine 198 is modified to Phosphoserine; by TLK2.

It belongs to the ASF1 family. As to quaternary structure, interacts with histone H3 (via C-terminus), including histone H3.1, H3.2 and H3.3, and histone H4; the interaction with H3 is direct. Interacts with the CHAF1A, CHAF1B and RBBP4 subunits of the CAF-1 complex. Interacts with HAT1, NASP and TAF1. Found in a soluble complex with NASP and histones H3 and H4; the interaction with NASP is probably indirect and mediated by H3-H4. Interacts with CDAN1. Found in a cytosolic complex with CDAN1, ASF1A, IPO4 and histones H3.1 and H4. Interacts with CREBBP. Post-translationally, phosphorylated by TLK2. Phosphorylated by TLK1. In terms of tissue distribution, highly expressed in germ cells. Restricted to premeiotic to meiotic stages during spermatogenesis.

It is found in the nucleus. The protein localises to the cytoplasm. Its subcellular location is the cytosol. In terms of biological role, histone chaperone that facilitates histone deposition and histone exchange and removal during nucleosome assembly and disassembly. Cooperates with chromatin assembly factor 1 (CAF-1) to promote replication-dependent chromatin assembly. Also involved in the nuclear import of the histone H3-H4 dimer together with importin-4 (IPO4): specifically recognizes and binds newly synthesized histones with the monomethylation of H3 'Lys-9' (H3K9me1) and diacetylation at 'Lys-5' and 'Lys-12' of H4 (H4K5ac and H4K12ac) marks in the cytosol. Does not participate in replication-independent nucleosome deposition which is mediated by ASF1A and HIRA. Required for gonad development. The polypeptide is Histone chaperone ASF1B (Mus musculus (Mouse)).